We begin with the raw amino-acid sequence, 150 residues long: N-alpha-acetyltransferase 30 (150 aa).

Positions valine 2–asparagine 150 constitute an N-acetyltransferase domain.

Belongs to the acetyltransferase family. MAK3 subfamily.

The protein resides in the cytoplasm. It localises to the nucleus. The enzyme catalyses N-terminal L-methionyl-L-leucyl-[protein] + acetyl-CoA = N-terminal N(alpha)-acetyl-L-methionyl-L-leucyl-[protein] + CoA + H(+). It carries out the reaction N-terminal L-methionyl-L-isoleucyl-[protein] + acetyl-CoA = N-terminal N(alpha)-acetyl-L-methionyl-L-isoleucyl-[protein] + CoA + H(+). It catalyses the reaction N-terminal L-methionyl-L-phenylalanyl-[protein] + acetyl-CoA = N-terminal N(alpha)-acetyl-L-methionyl-L-phenylalanyl-[protein] + CoA + H(+). The catalysed reaction is N-terminal L-methionyl-L-tryptophyl-[protein] + acetyl-CoA = N-terminal N(alpha)-acetyl-L-methionyl-L-tryptophyl-[protein] + CoA + H(+). The enzyme catalyses N-terminal L-methionyl-L-tyrosyl-[protein] + acetyl-CoA = N-terminal N(alpha)-acetyl-L-methionyl-L-tyrosyl-[protein] + CoA + H(+). Catalytic component of the NatC N-terminal acetyltransferase. The protein is N-alpha-acetyltransferase 30 (naa30) of Schizosaccharomyces pombe (strain 972 / ATCC 24843) (Fission yeast).